Here is a 155-residue protein sequence, read N- to C-terminus: Small ribosomal subunit protein uS7cz/uS7cy (155 aa).

This sequence belongs to the universal ribosomal protein uS7 family. In terms of assembly, part of the 30S ribosomal subunit.

The protein resides in the plastid. The protein localises to the chloroplast. Its function is as follows. One of the primary rRNA binding proteins, it binds directly to 16S rRNA where it nucleates assembly of the head domain of the 30S subunit. The polypeptide is Small ribosomal subunit protein uS7cz/uS7cy (rps7-A) (Daucus carota (Wild carrot)).